The primary structure comprises 480 residues: MKIYRVAKASEYLVITGIFIKDIKLKKKAWIFPGQSCTVLDLSPVNYTFEVQAMSAEKLPFVLPAVFTIGPRVDDQESLLKYAKLISPHDRHSNHVNELVQGIIEGETRVLAASMTMEEVFRGTKQFKQEVFDKVQLELNQFGLLIYNANVKQLVDVPGHEYFSYLGQKTQMEAKNQARVDVSEAKMKGEIGSKLREGQTLQNAAKIDAETKVIAMQRAGEGEKEGIKVRTEVKVFENQREAEVAQANSELAKKKAAWTKAAQVAEVEAKKAVALREAELQGEVERMNALTTTEKLKADLLSKASVQYETKVQEANWELYKKQKETEAILYEKKAEAEAQKASADATFYASKQAAEAELYAKKKEAEGIVTLGQAQGAYVSTLLNALGNDYTAVRDYLMINGDMFQEIAKINAEAIRGLEPKISIWTNGGDNSGGITDGAMGMKEVAGVYKMLPPLFKTVHEQTGMLPPAWMGALSEKSS.

Cysteine 37 is lipidated: S-palmitoyl cysteine. Residues 237–257 (ENQREAEVAQANSELAKKKAA) adopt a coiled-coil conformation.

The protein belongs to the band 7/mec-2 family. Flotillin subfamily. May be palmitoylated. As to expression, expressed in flowers in green pods. Primarily expressed in vascular tissues. Upon induction of nodulation, expansion of expression in the root cortex in the region of elongating root hairs, which will eventually become colonized by bacteria. Expressed in the infection zone in nodules.

Its subcellular location is the cell membrane. It localises to the membrane. The protein localises to the caveola. In terms of biological role, may act as a scaffolding protein within caveolar membranes, functionally participating in formation of caveolae or caveolae-like vesicles. Required for early symbiotic events and nodules formation. The protein is Flotillin-like protein 2 (FLOT2) of Medicago truncatula (Barrel medic).